Here is a 129-residue protein sequence, read N- to C-terminus: Prefoldin subunit 6 (129 aa).

Coiled-coil stretches lie at residues 6-26 (VRDL…IQKD) and 84-118 (IEYI…LQQR).

Belongs to the prefoldin subunit beta family. Heterohexamer of two PFD-alpha type and four PFD-beta type subunits forming prefoldin co-chaperone complex. Interacts with PFD2, PFD3, PFD4 and PFD5. Interacts with LSM8, a specific subunit of the LSM2-8 complex, which is a core component of the spliceosome. Binds to HSP90 to facilitate the formation of a larger complex made at least of HSP90, PFD6 and LSM8.

Its subcellular location is the cytoplasm. The protein resides in the nucleus. In terms of biological role, binds specifically to cytosolic chaperonin (c-CPN) and transfers target proteins to it. Binds to nascent polypeptide chain and promotes folding in an environment in which there are many competing pathways for nonnative proteins. Together with other chaperonins, contribute to the regulation of gene expression by modulating the spliceosome function on pre-mRNA splicing post-transcriptionally by acting as a co-chaperone of Hsp90 to control levels of LSM8. Required for the biogenesis of tubulins and for subsequent microtubules (MTs) organization and dynamicity, but unable to associate with microtubules. Involved in the process leading to microtubules dissociation in response to gibberellic acid (GA) probably due to the DELLA proteins-mediated translocation of the prefoldin co-chaperone complex from the cytoplasm to the nucleus. Contributes to the GA-dependent regulation of PIN2 trafficking at the plasma membrane, thus influencing auxin flux. The chain is Prefoldin subunit 6 from Arabidopsis thaliana (Mouse-ear cress).